We begin with the raw amino-acid sequence, 484 residues long: UDP-glycosyltransferase 73B4 (484 aa).

H18 (proton acceptor) is an active-site residue. Residues H18 and N89 each contribute to the an anthocyanidin site. D129 serves as the catalytic Charge relay. A356, Q358, H373, W376, N377, S378, and E381 together coordinate UDP-alpha-D-glucose. A396 contacts an anthocyanidin. UDP-alpha-D-glucose is bound by residues E397 and Q398.

It belongs to the UDP-glycosyltransferase family. As to expression, specifically expressed in roots.

The enzyme catalyses a flavonol + UDP-alpha-D-glucose = a flavonol 3-O-beta-D-glucoside + UDP + H(+). Its function is as follows. Possesses quercetin 3-O-glucosyltransferase and low 7-O-glucosyltransferase activities in vitro. Also active in vitro on benzoates and benzoate derivatives. Can detoxify the explosive 2,4,6-trinitrotoluene in plant by forming O- or C-glucose conjugates. The chain is UDP-glycosyltransferase 73B4 (UGT73B4) from Arabidopsis thaliana (Mouse-ear cress).